We begin with the raw amino-acid sequence, 1146 residues long: Nitrogen permease regulator 3 (1146 aa).

An N-terminal signal peptide occupies residues 1 to 25 (MDECLPNSCLLGVHLVISTHSGPQI). Ser76 is modified (phosphoserine). 4 disordered regions span residues 90–159 (AITP…LSDS), 177–221 (SSLS…SPQM), 237–340 (SGTN…HHYH), and 440–466 (GRWRKSKHKNKTRSKRSSSTTTNISRK). A compositionally biased stretch (polar residues) spans 105–123 (LPPTRSHANTVGSQSSIPA). Composition is skewed to low complexity over residues 150–159 (ETSSSGLSDS) and 177–196 (SSLSSSSLSSSPSSSSSSSP). Composition is skewed to polar residues over residues 201 to 221 (LSRTNSSFQSTDSMSPTSPQM), 237 to 253 (SGTNNKSRAASKRSQNF), and 277 to 303 (KPSQSTKKGNKLLKNTSNETDGNAFTG). Positions 304 to 315 (SCSISSKKSLSS) are enriched in low complexity. The segment covering 323–334 (LRNSSLNDTPGQ) has biased composition (polar residues). Over residues 441–455 (RWRKSKHKNKTRSKR) the composition is skewed to basic residues. Residues Ser486 and Ser987 each carry the phosphoserine modification. Residues 979–1047 (KTNTARRPSM…SRVDDRDDNE (69 aa)) form a disordered region. 2 stretches are compositionally biased toward basic and acidic residues: residues 986 to 1004 (PSMDYKKTDKKLDDEDGQS) and 1025 to 1042 (NNKDVDEKDNENDSRVDD).

The protein belongs to the NPR3 family. Component of the SEA complex composed of at least IML1/SEA1, RTC1/SEA2, MTC5/SEA3, NPR2, NPR3, SEA4, SEC13 and SEH1. Forms a heterodimer with NPR2.

The protein localises to the vacuole membrane. Its function is as follows. Component of the SEA complex which coats the vacuolar membrane and is involved in intracellular trafficking, autophagy, response to nitrogen starvation, and amino acid biogenesis. Mediates inactivation of the TORC1 complex in response to amino acid starvation. Required for meiotic nuclear division. The protein is Nitrogen permease regulator 3 (NPR3) of Saccharomyces cerevisiae (strain ATCC 204508 / S288c) (Baker's yeast).